Here is a 159-residue protein sequence, read N- to C-terminus: Vesicle transport protein SFT2B (159 aa).

M1 is subject to N-acetylmethionine. Residues 1-36 (MDKLKKVLSGQDTEDRSGLSEVVEASSLSWGTRIKG) are Cytoplasmic-facing. A Phosphoserine modification is found at S9. A helical transmembrane segment spans residues 37 to 57 (FIACFALGILCSVLGTLLLWV). At 58–63 (PRKGLG) the chain is on the lumenal side. The chain crosses the membrane as a helical span at residues 64 to 84 (LFAVFYTLGNIMSIGSTVFLM). Topologically, residues 85–98 (GPLKQLKRMFEPTR) are cytoplasmic. A helical transmembrane segment spans residues 99 to 119 (LIATILVLLCFALTLCSAFLW). The Lumenal portion of the chain corresponds to 120 to 122 (NKG). Residues 123–143 (LALIFCILQSLALTWYSLSYI) traverse the membrane as a helical segment. Residues 144–159 (PYARDAVKKCFAVCLA) lie on the Cytoplasmic side of the membrane.

It belongs to the SFT2 family.

It is found in the membrane. In terms of biological role, may be involved in fusion of retrograde transport vesicles derived from an endocytic compartment with the Golgi complex. The protein is Vesicle transport protein SFT2B of Mus musculus (Mouse).